We begin with the raw amino-acid sequence, 305 residues long: Porphobilinogen deaminase (305 aa).

Cysteine 239 carries the S-(dipyrrolylmethanemethyl)cysteine modification.

It belongs to the HMBS family. As to quaternary structure, monomer. It depends on dipyrromethane as a cofactor.

The enzyme catalyses 4 porphobilinogen + H2O = hydroxymethylbilane + 4 NH4(+). It functions in the pathway porphyrin-containing compound metabolism; protoporphyrin-IX biosynthesis; coproporphyrinogen-III from 5-aminolevulinate: step 2/4. Its function is as follows. Tetrapolymerization of the monopyrrole PBG into the hydroxymethylbilane pre-uroporphyrinogen in several discrete steps. The sequence is that of Porphobilinogen deaminase from Dichelobacter nodosus (strain VCS1703A).